The following is a 257-amino-acid chain: Deoxyribose-phosphate aldolase (257 aa).

Asp102 serves as the catalytic Proton donor/acceptor. The active-site Schiff-base intermediate with acetaldehyde is the Lys166. The Proton donor/acceptor role is filled by Lys198.

It belongs to the DeoC/FbaB aldolase family. DeoC type 2 subfamily.

It is found in the cytoplasm. The enzyme catalyses 2-deoxy-D-ribose 5-phosphate = D-glyceraldehyde 3-phosphate + acetaldehyde. It participates in carbohydrate degradation; 2-deoxy-D-ribose 1-phosphate degradation; D-glyceraldehyde 3-phosphate and acetaldehyde from 2-deoxy-alpha-D-ribose 1-phosphate: step 2/2. Functionally, catalyzes a reversible aldol reaction between acetaldehyde and D-glyceraldehyde 3-phosphate to generate 2-deoxy-D-ribose 5-phosphate. This chain is Deoxyribose-phosphate aldolase, found in Aeromonas salmonicida (strain A449).